Consider the following 258-residue polypeptide: RBPJ-interacting and tubulin-associated protein 1 (258 aa).

Disordered regions lie at residues 28–86 (FGSP…PRKK), 132–182 (TPPA…APRS), and 195–258 (AVPS…PPWK). Over residues 71–81 (SPSSRGSTPNL) the composition is skewed to polar residues. A Nuclear localization signal motif is present at residues 81-97 (LTPRKKNKYRLIGHTPS). The tract at residues 117 to 145 (RTAVEDAAKLRTLFWTPPATPRGSHSPRP) is interaction with RBPJ/RBPSUH. Residues 145–258 (PRETPLRAIH…CPQKPKPPWK (114 aa)) are interaction with tubulin. Composition is skewed to polar residues over residues 201-212 (HPASTAPQTNGP) and 236-245 (GSVSGPTTPQ).

The protein belongs to the RITA family. As to quaternary structure, interacts with RBPJ/RBPSUH.

The protein localises to the cytoplasm. It localises to the nucleus. The protein resides in the cytoskeleton. Its subcellular location is the microtubule organizing center. It is found in the centrosome. In terms of biological role, tubulin-binding protein that acts as a negative regulator of Notch signaling pathway. Shuttles between the cytoplasm and the nucleus and mediates the nuclear export of RBPJ/RBPSUH, thereby preventing the interaction between RBPJ/RBPSUH and NICD product of Notch proteins (Notch intracellular domain), leading to down-regulate Notch-mediated transcription. May play a role in neurogenesis. This chain is RBPJ-interacting and tubulin-associated protein 1 (Rita1), found in Rattus norvegicus (Rat).